A 451-amino-acid polypeptide reads, in one-letter code: UPF0210 protein NGO_1297 (451 aa).

This sequence belongs to the UPF0210 family. Homodimer.

The sequence is that of UPF0210 protein NGO_1297 from Neisseria gonorrhoeae (strain ATCC 700825 / FA 1090).